The following is a 278-amino-acid chain: 4-deoxy-L-threo-5-hexosulose-uronate ketol-isomerase (278 aa).

Positions 196, 198, 203, and 245 each coordinate Zn(2+).

It belongs to the KduI family. Requires Zn(2+) as cofactor.

It catalyses the reaction 5-dehydro-4-deoxy-D-glucuronate = 3-deoxy-D-glycero-2,5-hexodiulosonate. Its pathway is glycan metabolism; pectin degradation; 2-dehydro-3-deoxy-D-gluconate from pectin: step 4/5. In terms of biological role, catalyzes the isomerization of 5-dehydro-4-deoxy-D-glucuronate to 3-deoxy-D-glycero-2,5-hexodiulosonate. The protein is 4-deoxy-L-threo-5-hexosulose-uronate ketol-isomerase of Burkholderia cenocepacia (strain ATCC BAA-245 / DSM 16553 / LMG 16656 / NCTC 13227 / J2315 / CF5610) (Burkholderia cepacia (strain J2315)).